The following is a 207-amino-acid chain: Superoxide dismutase [Mn] (207 aa).

Histidine 28, histidine 76, aspartate 160, and histidine 164 together coordinate Mn(2+).

The protein belongs to the iron/manganese superoxide dismutase family. Mn(2+) serves as cofactor.

The enzyme catalyses 2 superoxide + 2 H(+) = H2O2 + O2. In terms of biological role, destroys superoxide anion radicals which are normally produced within the cells and which are toxic to biological systems. The protein is Superoxide dismutase [Mn] (sodA) of Mycobacterium lepraemurium.